The sequence spans 39 residues: Large ribosomal subunit protein bL36 (39 aa).

The protein belongs to the bacterial ribosomal protein bL36 family.

The protein is Large ribosomal subunit protein bL36 of Lactiplantibacillus plantarum (strain ATCC BAA-793 / NCIMB 8826 / WCFS1) (Lactobacillus plantarum).